The following is a 316-amino-acid chain: Pantothenate kinase (316 aa).

95–102 (GSVAVGKS) serves as a coordination point for ATP.

It belongs to the prokaryotic pantothenate kinase family.

The protein resides in the cytoplasm. The catalysed reaction is (R)-pantothenate + ATP = (R)-4'-phosphopantothenate + ADP + H(+). It functions in the pathway cofactor biosynthesis; coenzyme A biosynthesis; CoA from (R)-pantothenate: step 1/5. This Yersinia enterocolitica serotype O:8 / biotype 1B (strain NCTC 13174 / 8081) protein is Pantothenate kinase.